A 333-amino-acid polypeptide reads, in one-letter code: Fatty acid hydroxylase domain-containing protein 2 (333 aa).

The next 6 helical transmembrane spans lie at 29–49, 77–97, 134–154, 168–188, 215–235, and 237–257; these read FILG…TWHL, ILFF…FNGL, TVLF…YPFL, FHWF…LFYY, VISL…PVIV, and PLVM…ALII. The Fatty acid hydroxylase domain maps to 176-299; that stretch reads AIFTLIEEVL…LGVLDHLHGT (124 aa).

It belongs to the sterol desaturase family. As to expression, down-regulated in primary acute myeloid leukemia (AML) patients.

Its subcellular location is the cytoplasm. It is found in the membrane. Promotes megakaryocyte differentiation by enhancing ERK phosphorylation and up-regulating RUNX1 expression. This chain is Fatty acid hydroxylase domain-containing protein 2 (FAXDC2), found in Homo sapiens (Human).